A 310-amino-acid polypeptide reads, in one-letter code: HPr kinase/phosphorylase 1 (310 aa).

Residues histidine 139 and lysine 160 contribute to the active site. ATP is bound at residue 154–161 (GQSGVGKS). A Mg(2+)-binding site is contributed by serine 161. The Proton acceptor; for phosphorylation activity. Proton donor; for dephosphorylation activity role is filled by aspartate 178. The segment at 202–211 (LEIRGLGIIN) is important for the catalytic mechanism of both phosphorylation and dephosphorylation. Glutamate 203 provides a ligand contact to Mg(2+). Residue arginine 244 is part of the active site. The interval 265-270 (PVRPGR) is important for the catalytic mechanism of dephosphorylation.

Belongs to the HPrK/P family. Homohexamer. Mg(2+) is required as a cofactor.

The enzyme catalyses [HPr protein]-L-serine + ATP = [HPr protein]-O-phospho-L-serine + ADP + H(+). It carries out the reaction [HPr protein]-O-phospho-L-serine + phosphate + H(+) = [HPr protein]-L-serine + diphosphate. In terms of biological role, catalyzes the ATP- as well as the pyrophosphate-dependent phosphorylation of a specific serine residue in HPr, a phosphocarrier protein of the phosphoenolpyruvate-dependent sugar phosphotransferase system (PTS). HprK/P also catalyzes the pyrophosphate-producing, inorganic phosphate-dependent dephosphorylation (phosphorolysis) of seryl-phosphorylated HPr (P-Ser-HPr). The two antagonistic activities of HprK/P are regulated by several intracellular metabolites, which change their concentration in response to the absence or presence of rapidly metabolisable carbon sources (glucose, fructose, etc.) in the growth medium. Also phosphorylates/dephosphorylates the HPr-like catabolite repression protein crh on a specific serine residue. Therefore, by controlling the phosphorylation state of HPr and crh, HPrK/P is a sensor enzyme that plays a major role in the regulation of carbon metabolism and sugar transport: it mediates carbon catabolite repression (CCR), and regulates PTS-catalyzed carbohydrate uptake and inducer exclusion. The polypeptide is HPr kinase/phosphorylase 1 (hprK1) (Oceanobacillus iheyensis (strain DSM 14371 / CIP 107618 / JCM 11309 / KCTC 3954 / HTE831)).